The primary structure comprises 286 residues: Flagellin FlaB1 (286 aa).

The required for interaction with FliW stretch occupies residues 231 to 286 (LDIAAENLQAAESRIRDANIAKQMVEYTKNQVLTQSGTAMLAQANTSAQSILSILR).

It belongs to the bacterial flagellin family. As to quaternary structure, the flagellum consists of an outer layer composed of repeating units of FlaA around a core that contains several antigenically related polypeptides. Interacts via its C-terminus with FliW; a synthetic peptide of residues 229-247 partially blocks binding to FliW.

The protein resides in the periplasmic flagellum. The protein localises to the periplasm. Functionally, component of the core of the flagella. The chain is Flagellin FlaB1 (flaB1) from Treponema pallidum (strain Nichols).